The following is a 114-amino-acid chain: TYRO protein tyrosine kinase-binding protein (114 aa).

Residues 1 to 27 (MGAPEPSWCFLFLPVLLTVGGLSPVQA) form the signal peptide. Residues 28–42 (QSDNYPGCECSSVSP) lie on the Extracellular side of the membrane. The chain crosses the membrane as a helical span at residues 43–63 (GVLAGIVLGDLVLTLLIALAV). D52 contributes to the Ca(2+) binding site. The Cytoplasmic segment spans residues 64-114 (YSLGRLVSRGRGTADGTRKQHMAETESPYQELQGQRPEVYSDLNTQRQYYR). The disordered stretch occupies residues 72 to 114 (RGRGTADGTRKQHMAETESPYQELQGQRPEVYSDLNTQRQYYR). The 29-residue stretch at 81-109 (RKQHMAETESPYQELQGQRPEVYSDLNTQ) folds into the ITAM domain. 2 positions are modified to phosphotyrosine: Y92 and Y103. Over residues 105–114 (DLNTQRQYYR) the composition is skewed to polar residues.

This sequence belongs to the TYROBP family. In terms of assembly, homodimer; disulfide-linked. Homotrimer; disulfide-linked. Homotetramer; disulfide-linked. Homotrimers and homotetramers form when low levels of partner receptors are available and is competitive with assembly with interacting receptors. They may represent alternative oligomerization states or may be intermediates in the receptor assembly process. Binding of a metal cation aids in homooligomerization through coordination of the metal ion by the subunits of the oligomer. Interacts with TREM1. Interacts with TREM2. Interacts with CLECSF5. Interacts with CD300LB and CD300C2. Interacts with CD300E. Interacts (via ITAM domain) with SYK (via SH2 domains); activates SYK mediating neutrophils and macrophages integrin-mediated activation. Interacts with KLRC2. Interacts with CD300H. Interacts with KLRD1. Interacts with SIGLEC1. In terms of processing, following ligand binding by associated receptors, tyrosine phosphorylated in the ITAM domain which leads to activation of additional tyrosine kinases and subsequent cell activation.

The protein resides in the cell membrane. Its function is as follows. Adapter protein which non-covalently associates with activating receptors found on the surface of a variety of immune cells to mediate signaling and cell activation following ligand binding by the receptors. TYROBP is tyrosine-phosphorylated in the ITAM domain following ligand binding by the associated receptors which leads to activation of additional tyrosine kinases and subsequent cell activation. Also has an inhibitory role in some cells. Non-covalently associates with activating receptors of the CD300 family to mediate cell activation. Also mediates cell activation through association with activating receptors of the CD200R family. Required for neutrophil activation mediated by integrin. Required for the activation of myeloid cells mediated by the CLEC5A/MDL1 receptor. Associates with natural killer (NK) cell receptors such as the KLRD1/KLRC2 heterodimer to mediate NK cell activation. Associates with TREM1 to mediate activation of neutrophils and monocytes. Associates with TREM2 on monocyte-derived dendritic cells to mediate up-regulation of chemokine receptor CCR7 and dendritic cell maturation and survival. PAssociation with TREM2 mediates cytokine-induced formation of multinucleated giant cells which are formed by the fusion of macrophages. Stabilizes the TREM2 C-terminal fragment (TREM2-CTF) produced by TREM2 ectodomain shedding which suppresses the release of pro-inflammatory cytokines. In microglia, required with TREM2 for phagocytosis of apoptotic neurons. Required with ITGAM/CD11B in microglia to control production of microglial superoxide ions which promote the neuronal apoptosis that occurs during brain development. Promotes pro-inflammatory responses in microglia following nerve injury which accelerates degeneration of injured neurons. ositively regulates the expression of the IRAK3/IRAK-M kinase and IL10 production by liver dendritic cells and inhibits their T cell allosimulatory ability. Negatively regulates B cell proliferation. Required for CSF1-mediated osteoclast cytoskeletal organization. Positively regulates multinucleation during osteoclast development. This chain is TYRO protein tyrosine kinase-binding protein, found in Rattus norvegicus (Rat).